We begin with the raw amino-acid sequence, 331 residues long: Beta-hexosaminidase (331 aa).

Residues Asp60, Arg68, Arg133, and 163–164 (KH) each bind substrate. Catalysis depends on His176, which acts as the Proton donor/acceptor. Asp247 acts as the Nucleophile in catalysis.

It belongs to the glycosyl hydrolase 3 family. NagZ subfamily.

Its subcellular location is the cytoplasm. The catalysed reaction is Hydrolysis of terminal non-reducing N-acetyl-D-hexosamine residues in N-acetyl-beta-D-hexosaminides.. It functions in the pathway cell wall biogenesis; peptidoglycan recycling. In terms of biological role, plays a role in peptidoglycan recycling by cleaving the terminal beta-1,4-linked N-acetylglucosamine (GlcNAc) from peptide-linked peptidoglycan fragments, giving rise to free GlcNAc, anhydro-N-acetylmuramic acid and anhydro-N-acetylmuramic acid-linked peptides. The protein is Beta-hexosaminidase of Xanthomonas campestris pv. campestris (strain B100).